We begin with the raw amino-acid sequence, 361 residues long: Free fatty acid receptor 4 (361 aa).

A disordered region spans residues 1–21; the sequence is MSPECAQTTGPGPSRTPDQVN. Over 1-45 the chain is Extracellular; that stretch reads MSPECAQTTGPGPSRTPDQVNRTHFPFFSDVKGDHRLVLSVLETT. Asn-21 carries N-linked (GlcNAc...) asparagine glycosylation. The chain crosses the membrane as a helical span at residues 46 to 66; sequence VLGLIFVVSLLGNVCALVLVV. At 67-77 the chain is on the cytoplasmic side; that stretch reads RRRRRGATVSL. Residues 78-98 form a helical membrane-spanning segment; it reads VLNLFCADLLFTSAIPLVLVV. Residues 99–103 are Extracellular-facing; it reads RWTEA. A helical transmembrane segment spans residues 104–124; sequence WLLGPVVCHLLFYVMTMSGSV. Cys-111 and Cys-194 form a disulfide bridge. Topologically, residues 125 to 156 are cytoplasmic; it reads TILTLAAVSLERMVCIVRLRRGLSGPGRRTQA. Residues 157–177 form a helical membrane-spanning segment; sequence ALLAFIWGYSALAALPLCILF. The Extracellular segment spans residues 178–204; that stretch reads RVVPQRLPGGDQEIPICTLDWPNRIGE. Residues 205–225 form a helical membrane-spanning segment; the sequence is ISWDVFFVTLNFLVPGLVIVI. At 226-268 the chain is on the cytoplasmic side; that stretch reads SYSKILQITKASRKRLTLSLAYSESHQIRVSQQDYRLFRTLFL. Residues 269 to 289 traverse the membrane as a helical segment; the sequence is LMVSFFIMWSPIIITILLILI. Residues 290–295 lie on the Extracellular side of the membrane; sequence QNFRQD. The chain crosses the membrane as a helical span at residues 296–316; the sequence is LVIWPSLFFWVVAFTFANSAL. Over 317-361 the chain is Cytoplasmic; sequence NPILYNMSLFRSEWRKIFCCFFFPEKGAIFTETSIRRNDLSVIST. 2 positions are modified to phosphothreonine: Thr-347 and Thr-349. Residues Ser-350, Ser-357, and Ser-360 each carry the phosphoserine modification.

It belongs to the G-protein coupled receptor 1 family. Interacts (via C-terminus) with ARRB2 following LCFAs stimulation. Phosphorylated at two clusters of Ser and Thr residues located in the intracellular C-terminus. Prerequisite for FFAR4 internalization via an ARRB2-dependent pathway.

The protein resides in the cell membrane. It localises to the endosome membrane. The protein localises to the lysosome membrane. Its subcellular location is the cell projection. It is found in the cilium membrane. In terms of biological role, G-protein-coupled receptor for long-chain fatty acids (LCFAs) with a major role in adipogenesis, energy metabolism and inflammation. Signals via G-protein and beta-arrestin pathways. LCFAs sensing initiates activation of phosphoinositidase C-linked G proteins GNAQ and GNA11 (G(q)/G(11)), inducing a variety of cellular responses via second messenger pathways such as intracellular calcium mobilization, modulation of cyclic adenosine monophosphate (cAMP) production, and mitogen-activated protein kinases (MAPKs). After LCFAs binding, associates with beta-arrestin ARRB2 that acts as an adapter protein coupling the receptor to specific downstream signaling pathways, as well as mediating receptor endocytosis. In response to dietary fats, plays an important role in the regulation of adipocyte proliferation and differentiation. Acts as a receptor for omega-3 polyunsaturated fatty acids (PUFAs) at primary cilium of perivascular preadipocytes, initiating an adipogenic program via cAMP and CTCF-dependent chromatin remodeling that ultimately results in transcriptional activation of adipogenic genes and cell cycle entry. Induces differentiation of brown and beige adipocytes probably via autocrine and endocrine functions of FGF21 hormone. Contributes to the thermogenic activation of brown adipose tissue and the browning of white adipose tissue. Activates brown adipocytes by initiating intracellular calcium signaling leading to mitochondrial depolarization and fission, and overall increased mitochondrial respiration. Consequently stimulates fatty acid uptake and oxidation in mitochondria together with UCP1-mediated thermogenic respiration, eventually reducing fat mass. Regulates bi-potential differentiation of bone marrow mesenchymal stem cells toward osteoblasts or adipocytes likely by up-regulating distinct integrins. In response to dietary fats regulates hormone secretion and appetite. Stimulates GIP and GLP1 secretion from enteroendocrine cells as well as GCG secretion in pancreatic alpha cells, thereby playing a role in the regulation of blood glucose levels. Negatively regulates glucose-induced SST secretion in pancreatic delta cells. Mediates LCFAs inhibition of GHRL secretion, an appetite-controlling hormone. In taste buds, contributes to sensing of dietary fatty acids by the gustatory system. During the inflammatory response, promotes anti-inflammatory M2 macrophage differentiation in adipose tissue. Mediates the anti-inflammatory effects of omega-3 PUFAs via inhibition of NLRP3 inflammasome activation. In this pathway, interacts with adapter protein ARRB2 and inhibits the priming step triggered by Toll-like receptors (TLRs) at the level of TAK1 and TAB1. Further inhibits the activation step when ARRB2 directly associates with NLRP3, leading to inhibition of pro-inflammatory cytokine release. Mediates LCFAs anti-apoptotic effects. This chain is Free fatty acid receptor 4 (Ffar4), found in Rattus norvegicus (Rat).